The primary structure comprises 125 residues: Large-conductance mechanosensitive channel (125 aa).

A run of 3 helical transmembrane segments spans residues 19–39, 42–62, and 66–86; these read VGVIIGGAFTAIVNSLVKYII, FLGLFVGAIDFSDLVFKIGNA, and VGSFLNAVINFLIIAFVVFLM.

The protein belongs to the MscL family. Homopentamer.

It is found in the cell membrane. Channel that opens in response to stretch forces in the membrane lipid bilayer. May participate in the regulation of osmotic pressure changes within the cell. In Ligilactobacillus salivarius (strain UCC118) (Lactobacillus salivarius), this protein is Large-conductance mechanosensitive channel.